Here is a 372-residue protein sequence, read N- to C-terminus: uncharacterized protein (372 aa).

Residues 1–24 (MSYYQIIVCILASISYIILLEVIA) form the signal peptide. One can recognise a PA domain in the interval 92–215 (PNRNDTDASY…SSYNLLWSDL (124 aa)). A helical transmembrane segment spans residues 236–256 (FWPFLLCFSPSIIMLITVQAL). Serine 280 bears the Phosphoserine mark. An RING-type; atypical zinc finger spans residues 321-363 (CVICLESFTKGDKVVALPCKHEFHRPCIAKWIVDYRHACPTCN).

The protein localises to the golgi apparatus membrane. It localises to the vacuole membrane. This is an uncharacterized protein from Schizosaccharomyces pombe (strain 972 / ATCC 24843) (Fission yeast).